A 295-amino-acid chain; its full sequence is Phosphatidylserine decarboxylase proenzyme (295 aa).

Active-site charge relay system; for autoendoproteolytic cleavage activity residues include Asp-113, His-169, and Ser-256. The active-site Schiff-base intermediate with substrate; via pyruvic acid; for decarboxylase activity is the Ser-256. Residue Ser-256 is modified to Pyruvic acid (Ser); by autocatalysis.

This sequence belongs to the phosphatidylserine decarboxylase family. PSD-B subfamily. Prokaryotic type II sub-subfamily. Heterodimer of a large membrane-associated beta subunit and a small pyruvoyl-containing alpha subunit. Pyruvate is required as a cofactor. Is synthesized initially as an inactive proenzyme. Formation of the active enzyme involves a self-maturation process in which the active site pyruvoyl group is generated from an internal serine residue via an autocatalytic post-translational modification. Two non-identical subunits are generated from the proenzyme in this reaction, and the pyruvate is formed at the N-terminus of the alpha chain, which is derived from the carboxyl end of the proenzyme. The autoendoproteolytic cleavage occurs by a canonical serine protease mechanism, in which the side chain hydroxyl group of the serine supplies its oxygen atom to form the C-terminus of the beta chain, while the remainder of the serine residue undergoes an oxidative deamination to produce ammonia and the pyruvoyl prosthetic group on the alpha chain. During this reaction, the Ser that is part of the protease active site of the proenzyme becomes the pyruvoyl prosthetic group, which constitutes an essential element of the active site of the mature decarboxylase.

It is found in the cell membrane. The catalysed reaction is a 1,2-diacyl-sn-glycero-3-phospho-L-serine + H(+) = a 1,2-diacyl-sn-glycero-3-phosphoethanolamine + CO2. Its pathway is phospholipid metabolism; phosphatidylethanolamine biosynthesis; phosphatidylethanolamine from CDP-diacylglycerol: step 2/2. Functionally, catalyzes the formation of phosphatidylethanolamine (PtdEtn) from phosphatidylserine (PtdSer). This is Phosphatidylserine decarboxylase proenzyme from Clostridium novyi (strain NT).